A 577-amino-acid chain; its full sequence is Arginine--tRNA ligase (577 aa).

Residues 122-132 (PNVAKEMHVGH) carry the 'HIGH' region motif.

It belongs to the class-I aminoacyl-tRNA synthetase family. In terms of assembly, monomer.

It is found in the cytoplasm. The enzyme catalyses tRNA(Arg) + L-arginine + ATP = L-arginyl-tRNA(Arg) + AMP + diphosphate. The polypeptide is Arginine--tRNA ligase (Salmonella agona (strain SL483)).